A 149-amino-acid polypeptide reads, in one-letter code: MLAVFEQSIGRPPPELSLPQAGIQKKEAKTREEIAESFKTWKQDSTFYHLFNGNFMAFSHGNENPLQPRSIVVMDDVFCIFSGALDNTFDLRKHYGLSRQATEAMIMVEAYKVLRDRAPYPPDQVIKELEGKFAFILFDSKASTLFLAR.

As to expression, stem-specific (active at lower levels in other organs).

The sequence is that of Stem-specific protein TSJT1 (TSJT1) from Nicotiana tabacum (Common tobacco).